Reading from the N-terminus, the 317-residue chain is Cytochrome c biogenesis protein CcsA (317 aa).

8 consecutive transmembrane segments (helical) span residues Ile-9–Phe-29, Thr-46–Ser-63, Leu-71–Phe-91, Leu-98–Leu-118, Met-143–Ile-163, Ile-225–Asn-245, Glu-258–His-273, and Ala-286–Leu-306.

It belongs to the CcmF/CycK/Ccl1/NrfE/CcsA family. In terms of assembly, may interact with Ccs1.

It is found in the plastid. The protein resides in the chloroplast thylakoid membrane. Its function is as follows. Required during biogenesis of c-type cytochromes (cytochrome c6 and cytochrome f) at the step of heme attachment. In Citrus sinensis (Sweet orange), this protein is Cytochrome c biogenesis protein CcsA.